Consider the following 546-residue polypeptide: ATP synthase subunit alpha (546 aa).

173–180 (GDRQTGKT) serves as a coordination point for ATP. The segment at 520–546 (VDKKTAPKSVTPVDQEQIKAGKAQEKK) is disordered. Residues 535-546 (EQIKAGKAQEKK) are compositionally biased toward basic and acidic residues.

This sequence belongs to the ATPase alpha/beta chains family. As to quaternary structure, F-type ATPases have 2 components, CF(1) - the catalytic core - and CF(0) - the membrane proton channel. CF(1) has five subunits: alpha(3), beta(3), gamma(1), delta(1), epsilon(1). CF(0) has three main subunits: a(1), b(2) and c(9-12). The alpha and beta chains form an alternating ring which encloses part of the gamma chain. CF(1) is attached to CF(0) by a central stalk formed by the gamma and epsilon chains, while a peripheral stalk is formed by the delta and b chains.

The protein localises to the cell membrane. The catalysed reaction is ATP + H2O + 4 H(+)(in) = ADP + phosphate + 5 H(+)(out). Functionally, produces ATP from ADP in the presence of a proton gradient across the membrane. The alpha chain is a regulatory subunit. The polypeptide is ATP synthase subunit alpha (Bifidobacterium animalis subsp. lactis (strain AD011)).